A 501-amino-acid chain; its full sequence is Probable malate:quinone oxidoreductase (501 aa).

It belongs to the MQO family. It depends on FAD as a cofactor.

It catalyses the reaction (S)-malate + a quinone = a quinol + oxaloacetate. Its pathway is carbohydrate metabolism; tricarboxylic acid cycle; oxaloacetate from (S)-malate (quinone route): step 1/1. The polypeptide is Probable malate:quinone oxidoreductase (Mycolicibacterium paratuberculosis (strain ATCC BAA-968 / K-10) (Mycobacterium paratuberculosis)).